The sequence spans 600 residues: Elongation factor 4 (600 aa).

The tr-type G domain occupies 3–185 (KYIRNFSIIA…CLIHDIPHPQ (183 aa)). GTP contacts are provided by residues 15-20 (DHGKST) and 132-135 (NKID).

It belongs to the TRAFAC class translation factor GTPase superfamily. Classic translation factor GTPase family. LepA subfamily.

It localises to the cell inner membrane. The enzyme catalyses GTP + H2O = GDP + phosphate + H(+). Functionally, required for accurate and efficient protein synthesis under certain stress conditions. May act as a fidelity factor of the translation reaction, by catalyzing a one-codon backward translocation of tRNAs on improperly translocated ribosomes. Back-translocation proceeds from a post-translocation (POST) complex to a pre-translocation (PRE) complex, thus giving elongation factor G a second chance to translocate the tRNAs correctly. Binds to ribosomes in a GTP-dependent manner. This chain is Elongation factor 4, found in Blochmanniella pennsylvanica (strain BPEN).